A 382-amino-acid polypeptide reads, in one-letter code: UDP-4-amino-4-deoxy-L-arabinose--oxoglutarate aminotransferase (382 aa).

Lys182 carries the post-translational modification N6-(pyridoxal phosphate)lysine.

This sequence belongs to the DegT/DnrJ/EryC1 family. ArnB subfamily. In terms of assembly, homodimer. Pyridoxal 5'-phosphate serves as cofactor.

It catalyses the reaction UDP-4-amino-4-deoxy-beta-L-arabinose + 2-oxoglutarate = UDP-beta-L-threo-pentopyranos-4-ulose + L-glutamate. Its pathway is nucleotide-sugar biosynthesis; UDP-4-deoxy-4-formamido-beta-L-arabinose biosynthesis; UDP-4-deoxy-4-formamido-beta-L-arabinose from UDP-alpha-D-glucuronate: step 2/3. It participates in bacterial outer membrane biogenesis; lipopolysaccharide biosynthesis. Its function is as follows. Catalyzes the conversion of UDP-4-keto-arabinose (UDP-Ara4O) to UDP-4-amino-4-deoxy-L-arabinose (UDP-L-Ara4N). The modified arabinose is attached to lipid A and is required for resistance to polymyxin and cationic antimicrobial peptides. The chain is UDP-4-amino-4-deoxy-L-arabinose--oxoglutarate aminotransferase from Pectobacterium carotovorum subsp. carotovorum (strain PC1).